The chain runs to 200 residues: Recombination protein RecR (200 aa).

The C4-type zinc-finger motif lies at 57 to 72 (CEHCRTFTEEDICSIC). Positions 81–176 (RLLCVVEMPA…KVSRIAHGIP (96 aa)) constitute a Toprim domain.

Belongs to the RecR family.

May play a role in DNA repair. It seems to be involved in an RecBC-independent recombinational process of DNA repair. It may act with RecF and RecO. This chain is Recombination protein RecR, found in Mannheimia succiniciproducens (strain KCTC 0769BP / MBEL55E).